The primary structure comprises 246 residues: rRNA methyltransferase 2, mitochondrial (246 aa).

The N-terminal 18 residues, 1–18, are a transit peptide targeting the mitochondrion; that stretch reads MAGYLKLVCVSFQRQGFH. S-adenosyl-L-methionine is bound by residues 83 to 86, D112, 129 to 130, and D154; these read PGAW and DV. K194 acts as the Proton acceptor in catalysis.

Belongs to the class I-like SAM-binding methyltransferase superfamily. RNA methyltransferase RlmE family. As to expression, widely expressed, with highest expression in muscle, placenta, and heart.

The protein resides in the mitochondrion. It carries out the reaction uridine(1369) in 16S rRNA + S-adenosyl-L-methionine = 2'-O-methyluridine(1369) in 16S rRNA + S-adenosyl-L-homocysteine + H(+). In terms of biological role, S-adenosyl-L-methionine-dependent 2'-O-ribose methyltransferase that catalyzes the formation of 2'-O-methyluridine at position 1369 (Um1369) in the 16S mitochondrial large subunit ribosomal RNA (mtLSU rRNA), a universally conserved modification in the peptidyl transferase domain of the mtLSU rRNA. This activity may require prior 2'-O-methylguanosine modification at position 1370 (Gm1370) by MRM3. Essential for late-stage assembly of mtLSU required for efficient translation of mitochondrial DNA encoded proteins; methyltransferase activity is not required for this function. Essential for mitochondrial respiratory function. The protein is rRNA methyltransferase 2, mitochondrial of Homo sapiens (Human).